The sequence spans 441 residues: Ribosomal protein uS12 methylthiotransferase RimO (441 aa).

The MTTase N-terminal domain maps to 8–118 (PKIGFVSLGC…VLQHVHHYVP (111 aa)). 6 residues coordinate [4Fe-4S] cluster: Cys17, Cys53, Cys82, Cys150, Cys154, and Cys157. Residues 136–373 (LTPRHYAYLK…MQLQQQISAE (238 aa)) form the Radical SAM core domain. One can recognise a TRAM domain in the interval 376 to 441 (QEKVGREILV…DEYDLWGSRV (66 aa)).

It belongs to the methylthiotransferase family. RimO subfamily. Requires [4Fe-4S] cluster as cofactor.

Its subcellular location is the cytoplasm. The enzyme catalyses L-aspartate(89)-[ribosomal protein uS12]-hydrogen + (sulfur carrier)-SH + AH2 + 2 S-adenosyl-L-methionine = 3-methylsulfanyl-L-aspartate(89)-[ribosomal protein uS12]-hydrogen + (sulfur carrier)-H + 5'-deoxyadenosine + L-methionine + A + S-adenosyl-L-homocysteine + 2 H(+). Its function is as follows. Catalyzes the methylthiolation of an aspartic acid residue of ribosomal protein uS12. The sequence is that of Ribosomal protein uS12 methylthiotransferase RimO from Salmonella paratyphi B (strain ATCC BAA-1250 / SPB7).